Reading from the N-terminus, the 268-residue chain is Phosphatidylglycerol--prolipoprotein diacylglyceryl transferase (268 aa).

7 helical membrane passes run 23–43, 62–82, 97–117, 132–152, 179–199, 206–226, and 241–261; these read IGLR…RWLA, LLFN…VFFY, VWEG…AMIW, FVAP…FINL, SQLY…NIFI, ASVA…VEYV, and GQAL…WAYS. An a 1,2-diacyl-sn-glycero-3-phospho-(1'-sn-glycerol)-binding site is contributed by arginine 145.

It belongs to the Lgt family.

Its subcellular location is the cell inner membrane. It catalyses the reaction L-cysteinyl-[prolipoprotein] + a 1,2-diacyl-sn-glycero-3-phospho-(1'-sn-glycerol) = an S-1,2-diacyl-sn-glyceryl-L-cysteinyl-[prolipoprotein] + sn-glycerol 1-phosphate + H(+). It participates in protein modification; lipoprotein biosynthesis (diacylglyceryl transfer). In terms of biological role, catalyzes the transfer of the diacylglyceryl group from phosphatidylglycerol to the sulfhydryl group of the N-terminal cysteine of a prolipoprotein, the first step in the formation of mature lipoproteins. The polypeptide is Phosphatidylglycerol--prolipoprotein diacylglyceryl transferase (Haemophilus influenzae (strain PittEE)).